A 253-amino-acid polypeptide reads, in one-letter code: MVSSFTSAPRSGFYYFAQGWKLVSQPGIRRFVILPLLVNILLMGGAFWWLFTQLDVWIPTLMSYVPDWLQWLSYLLWPLAVISVLLVFGYFFSTIANWIAAPFNGLLAEQLEARLTGATPPDTGIFGIMKDVPRIMKREWQKFAWYLPRAIVLLILYFIPGIGQTVAPVLWFLFSAWMLAIQYCDYPFDNHKVPFKEMRIALRTRKITNMQFGALTSLFTMIPLLNLFIMPVAVCGATAMWVDCYRDKHAMWR.

4 consecutive transmembrane segments (helical) span residues Phe-31–Phe-51, Leu-75–Ile-95, Ile-151–Trp-171, and Ile-222–Val-242.

It belongs to the CysZ family.

The protein localises to the cell inner membrane. Its function is as follows. High affinity, high specificity proton-dependent sulfate transporter, which mediates sulfate uptake. Provides the sulfur source for the cysteine synthesis pathway. The sequence is that of Sulfate transporter CysZ from Escherichia coli O7:K1 (strain IAI39 / ExPEC).